A 985-amino-acid polypeptide reads, in one-letter code: Serine/threonine-protein kinase N2 (985 aa).

The 77-residue stretch at 33 to 109 folds into the REM-1 1 domain; it reads KLDFSDTIVQ…LQELNAHIVV (77 aa). N6-acetyllysine is present on Lys-77. Residue Ser-110 is modified to Phosphoserine. The segment at 111–136 is disordered; the sequence is DPEDYTDCPRTPDTPNSDSRSSTSNN. A phosphothreonine mark is found at Thr-121 and Thr-124. The span at 121–136 shows a compositional bias: low complexity; the sequence is TPDTPNSDSRSSTSNN. 2 consecutive REM-1 domains span residues 121–204 and 207–286; these read TPDT…TNEL and DNAK…ELPK. Residues Ser-303, Ser-307, Ser-361, and Ser-363 each carry the phosphoserine modification. Residues 352–383 are disordered; that stretch reads ATSVALPGWSPSENRSSFMSRTSKSKSGSSRN. Positions 354–474 constitute a C2 domain; it reads SVALPGWSPS…LYLEPQGTLF (121 aa). The segment covering 366-382 has biased composition (low complexity); that stretch reads RSSFMSRTSKSKSGSSR. The segment at 383–464 is necessary to rescue apical junction formation; sequence NLLKTDDLSN…FLDNQRHGMA (82 aa). Residues Ser-536, Ser-584, Ser-621, and Ser-632 each carry the phosphoserine modification. The segment at 570–590 is disordered; the sequence is DLEPEAPPAPPRASSLGEIDD. The Protein kinase domain occupies 658-917; that stretch reads FRCCAVLGRG…AEDVKKHPFF (260 aa). ATP-binding positions include 664-672 and Lys-687; that span reads LGRGHFGKV. The active-site Proton acceptor is the Asp-783. Thr-817 carries the phosphothreonine; by PDPK1 modification. A necessary for the catalytic activity region spans residues 918 to 978; that stretch reads RLTDWSALLD…EEEQEMFRDF (61 aa). Residues 918-985 form the AGC-kinase C-terminal domain; it reads RLTDWSALLD…RDFDYVADWC (68 aa). Ser-953 is subject to Phosphoserine. Thr-959 is subject to Phosphothreonine. The negatively regulates the responsiveness of the catalytic activity by cardiolipin and is required for optimal activation by the GTP-bound RhoA stretch occupies residues 979–985; sequence DYVADWC.

It belongs to the protein kinase superfamily. AGC Ser/Thr protein kinase family. PKC subfamily. Interacts (via the REM repeats) with RHOA (GTP-bound form preferentially) and interacts (via the REM repeats) with RAC1 (GTP-bound form preferentially); the interactions induce its autophosphorylation. Interacts with RHOC. Interacts with NCK1 (via SH3 domains) and NCK2. Interacts with CD44. Interacts (via C-terminal kinase domain) with PDPK1; the interaction stimulates PDPK1 kinase activity. Interacts with MAP3K2; the interaction activates PRK2 kinase activity in a MAP3K2-independent kinase activity. Interacts (via C-terminal domain) with AKT1; the interaction occurs with the C-terminal cleavage product of PRK2 in apoptotic cells. Interacts (via C-terminus) with PTPN13 (via PDZ 3 domain). Interacts with CDK10. In terms of processing, phosphorylated during mitosis. Autophosphorylated. Phosphorylated. Binding to Rho and Rac promotes autophosphorylation and phosphorylation on serine and threonine residues. Phosphorylated by CDK10. Proteolytically cleaved by caspase-3 during the induction of apoptotic cell death. Activated by limited proteolysis with trypsin. In terms of tissue distribution, expressed in liver (at protein level).

The protein resides in the cytoplasm. The protein localises to the nucleus. It localises to the membrane. It is found in the cell projection. Its subcellular location is the lamellipodium. The protein resides in the cytoskeleton. The protein localises to the cleavage furrow. It localises to the midbody. It is found in the cell junction. It carries out the reaction L-seryl-[protein] + ATP = O-phospho-L-seryl-[protein] + ADP + H(+). The catalysed reaction is L-threonyl-[protein] + ATP = O-phospho-L-threonyl-[protein] + ADP + H(+). With respect to regulation, kinase activity is activated upon binding to GTP-bound Rho1/Rac1 GTPases. Activated by caspase-3 (CASP3) cleavage during apoptosis. Activated by lipids, particularly cardiolipin and to a lesser extent by other acidic phospholipids and unsaturated fatty acids. Two specific sites, Thr-817 (activation loop of the kinase domain) and Thr-959 (turn motif), need to be phosphorylated for its full activation. PKC-related serine/threonine-protein kinase and Rho/Rac effector protein that participates in specific signal transduction responses in the cell. Plays a role in the regulation of cell cycle progression, actin cytoskeleton assembly, cell migration, cell adhesion, tumor cell invasion and transcription activation signaling processes. Phosphorylates CTTN in hyaluronan-induced astrocytes and hence decreases CTTN ability to associate with filamentous actin. Phosphorylates HDAC5, therefore lead to impair HDAC5 import. Direct RhoA target required for the regulation of the maturation of primordial junctions into apical junction formation in bronchial epithelial cells. Required for G2/M phases of the cell cycle progression and abscission during cytokinesis in a ECT2-dependent manner. Stimulates FYN kinase activity that is required for establishment of skin cell-cell adhesion during keratinocytes differentiation. Regulates epithelial bladder cells speed and direction of movement during cell migration and tumor cell invasion. Inhibits Akt pro-survival-induced kinase activity. Mediates Rho protein-induced transcriptional activation via the c-fos serum response factor (SRF). Involved in the negative regulation of ciliogenesis. The polypeptide is Serine/threonine-protein kinase N2 (Pkn2) (Rattus norvegicus (Rat)).